A 574-amino-acid chain; its full sequence is ATP-dependent RNA helicase RhlB (574 aa).

The short motif at 9–37 (VTFSSFDLHPALVAGLESAGFTRCTPIQA) is the Q motif element. A Helicase ATP-binding domain is found at 40-220 (LPVALPGGDV…YEHMNEPEKL (181 aa)). 53-60 (AQTGTGKT) contacts ATP. Positions 166-169 (DEAD) match the DEAD box motif. In terms of domain architecture, Helicase C-terminal spans 231–393 (RVRQRIYFPS…PVTSELLTPL (163 aa)). Positions 423 to 432 (EQRAAEEQRR) are enriched in basic and acidic residues. The interval 423–574 (EQRAAEEQRR…RRLRSLVSGN (152 aa)) is disordered. Over residues 435-449 (GRSGPGGGSRSGSGG) the composition is skewed to gly residues. The span at 477–495 (AAAAQTEKPVVAAAAAQAP) shows a compositional bias: low complexity. Over residues 506-515 (PRKRRRRRNG) the composition is skewed to basic residues. Low complexity-rich tracts occupy residues 523 to 535 (PAVA…APAA) and 553 to 562 (SSGSPSLLGR).

Belongs to the DEAD box helicase family. RhlB subfamily. Component of the RNA degradosome, which is a multiprotein complex involved in RNA processing and mRNA degradation.

It is found in the cytoplasm. It carries out the reaction ATP + H2O = ADP + phosphate + H(+). DEAD-box RNA helicase involved in RNA degradation. Has RNA-dependent ATPase activity and unwinds double-stranded RNA. The polypeptide is ATP-dependent RNA helicase RhlB (Xanthomonas oryzae pv. oryzae (strain KACC10331 / KXO85)).